The chain runs to 265 residues: Orotidine 5'-phosphate decarboxylase (265 aa).

Residues aspartate 37, 59–61 (KTH), 91–100 (DRKFADIGNT), tyrosine 217, and arginine 235 contribute to the substrate site. Catalysis depends on lysine 93, which acts as the Proton donor.

It belongs to the OMP decarboxylase family.

It carries out the reaction orotidine 5'-phosphate + H(+) = UMP + CO2. The protein operates within pyrimidine metabolism; UMP biosynthesis via de novo pathway; UMP from orotate: step 2/2. This Candida glabrata (strain ATCC 2001 / BCRC 20586 / JCM 3761 / NBRC 0622 / NRRL Y-65 / CBS 138) (Yeast) protein is Orotidine 5'-phosphate decarboxylase (URA3).